Here is a 179-residue protein sequence, read N- to C-terminus: Large ribosomal subunit protein uL5 (179 aa).

This sequence belongs to the universal ribosomal protein uL5 family. In terms of assembly, part of the 50S ribosomal subunit; part of the 5S rRNA/L5/L18/L25 subcomplex. Contacts the 5S rRNA and the P site tRNA. Forms a bridge to the 30S subunit in the 70S ribosome.

Functionally, this is one of the proteins that bind and probably mediate the attachment of the 5S RNA into the large ribosomal subunit, where it forms part of the central protuberance. In the 70S ribosome it contacts protein S13 of the 30S subunit (bridge B1b), connecting the 2 subunits; this bridge is implicated in subunit movement. Contacts the P site tRNA; the 5S rRNA and some of its associated proteins might help stabilize positioning of ribosome-bound tRNAs. The sequence is that of Large ribosomal subunit protein uL5 from Bordetella petrii (strain ATCC BAA-461 / DSM 12804 / CCUG 43448).